The following is a 151-amino-acid chain: UPF0178 protein RD1_0321 (151 aa).

The protein belongs to the UPF0178 family.

The chain is UPF0178 protein RD1_0321 from Roseobacter denitrificans (strain ATCC 33942 / OCh 114) (Erythrobacter sp. (strain OCh 114)).